Reading from the N-terminus, the 68-residue chain is Serine rich endogenous peptide 13 (68 aa).

The signal sequence occupies residues 1 to 31; sequence MATKASNLVVFLLSLLLLFLLISFQVGVADA. The interval 33 to 68 is disordered; the sequence is RNKRQGQEQRVDYDYPRPPTAPIYLPPSKSRKGKGP. The span at 37–47 shows a compositional bias: basic and acidic residues; the sequence is QGQEQRVDYDY. A compositionally biased stretch (pro residues) spans 48–57; the sequence is PRPPTAPIYL. An SCOOP motif motif is present at residues 54-68; that stretch reads PIYLPPSKSRKGKGP. A SxS motif essential for MIK2 binding motif is present at residues 60–62; sequence SKS.

This sequence belongs to the serine rich endogenous peptide (SCOOP) phytocytokine family. As to quaternary structure, interacts with MIK2 (via extracellular leucine-rich repeat domain); this interaction triggers the formation of complex between MIK2 and the BAK1/SERK3 and SERK4 coreceptors, and subsequent BAK1 activation by phosphorylation. As to expression, mostly expressed in stems and flowers and, to a lower extent, in seedlings shoots, roots, siliques, seeds and leaves.

It is found in the cell membrane. The protein localises to the secreted. The protein resides in the extracellular space. Its subcellular location is the apoplast. Brassicaceae-specific phytocytokine (plant endogenous peptide released into the apoplast) perceived by MIK2 in a BAK1/SERK3 and SERK4 coreceptors-dependent manner, that modulates various physiological and antimicrobial processes including growth prevention and reactive oxygen species (ROS) response regulation. Promotes the expression of immune-related marker genes (e.g. WRKY30, WRKY33 and CYP81F2) in a MIK2-dependent manner. Inhibits root growth and regulates root meristems. Prevents general growth and development. Exhibits antibacterial effects against Pseudomonas syringae pv. tomato DC3000, Ralstonia solanacearum, Bacillus subtilis and Agrobacterium tumefaciens, thus being an antimicrobial peptide (AMP). This chain is Serine rich endogenous peptide 13, found in Arabidopsis thaliana (Mouse-ear cress).